A 425-amino-acid polypeptide reads, in one-letter code: Histidine--tRNA ligase 1 (425 aa).

The protein belongs to the class-II aminoacyl-tRNA synthetase family. As to quaternary structure, homodimer.

It localises to the cytoplasm. The catalysed reaction is tRNA(His) + L-histidine + ATP = L-histidyl-tRNA(His) + AMP + diphosphate + H(+). In Bacillus anthracis, this protein is Histidine--tRNA ligase 1.